Consider the following 827-residue polypeptide: Glycerol-3-phosphate acyltransferase (827 aa).

The HXXXXD motif signature appears at 325–330 (CHRSHM).

The protein belongs to the GPAT/DAPAT family.

It is found in the cell inner membrane. The enzyme catalyses sn-glycerol 3-phosphate + an acyl-CoA = a 1-acyl-sn-glycero-3-phosphate + CoA. The protein operates within phospholipid metabolism; CDP-diacylglycerol biosynthesis; CDP-diacylglycerol from sn-glycerol 3-phosphate: step 1/3. This chain is Glycerol-3-phosphate acyltransferase, found in Shigella sonnei (strain Ss046).